A 154-amino-acid chain; its full sequence is Ubiquitin-conjugating enzyme E2 L5 (154 aa).

The UBC core domain maps to 2–149 (AASRRLMKEL…AEEFTKKYGE (148 aa)). The active-site Glycyl thioester intermediate is C86.

It belongs to the ubiquitin-conjugating enzyme family.

The catalysed reaction is S-ubiquitinyl-[E1 ubiquitin-activating enzyme]-L-cysteine + [E2 ubiquitin-conjugating enzyme]-L-cysteine = [E1 ubiquitin-activating enzyme]-L-cysteine + S-ubiquitinyl-[E2 ubiquitin-conjugating enzyme]-L-cysteine.. Its pathway is protein modification; protein ubiquitination. Catalyzes the covalent attachment of ubiquitin to other proteins. In Homo sapiens (Human), this protein is Ubiquitin-conjugating enzyme E2 L5.